The sequence spans 240 residues: Cilia- and flagella-associated protein 77 (240 aa).

It belongs to the CFAP77 family.

Its subcellular location is the cytoplasm. The protein localises to the cytoskeleton. It localises to the cilium axoneme. It is found in the flagellum axoneme. In terms of biological role, microtubule inner protein (MIP) part of the dynein-decorated doublet microtubules (DMTs) in cilia axoneme, which is required for motile cilia beating. The polypeptide is Cilia- and flagella-associated protein 77 (Danio rerio (Zebrafish)).